The sequence spans 296 residues: tRNA uridine(34) hydroxylase (296 aa).

The 96-residue stretch at 130-225 (RGDDVVFFDG…YGEAYGNDGY (96 aa)) folds into the Rhodanese domain. The Cysteine persulfide intermediate role is filled by cysteine 185.

The protein belongs to the TrhO family.

It carries out the reaction uridine(34) in tRNA + AH2 + O2 = 5-hydroxyuridine(34) in tRNA + A + H2O. Its function is as follows. Catalyzes oxygen-dependent 5-hydroxyuridine (ho5U) modification at position 34 in tRNAs. This chain is tRNA uridine(34) hydroxylase, found in Corynebacterium kroppenstedtii (strain DSM 44385 / JCM 11950 / CIP 105744 / CCUG 35717).